Consider the following 80-residue polypeptide: Protein OPG051 (80 aa).

This sequence belongs to the orthopoxvirus OPG051 family.

This Vaccinia virus (strain Western Reserve) (VACV) protein is Protein OPG051 (OPG051).